Consider the following 352-residue polypeptide: Peptide chain release factor 1 (352 aa).

An N5-methylglutamine modification is found at glutamine 233. Positions asparagine 288 to asparagine 309 are disordered. The span at alanine 289–arginine 306 shows a compositional bias: basic and acidic residues.

The protein belongs to the prokaryotic/mitochondrial release factor family. Methylated by PrmC. Methylation increases the termination efficiency of RF1.

The protein localises to the cytoplasm. Functionally, peptide chain release factor 1 directs the termination of translation in response to the peptide chain termination codons UAG and UAA. The polypeptide is Peptide chain release factor 1 (Helicobacter pylori (strain G27)).